A 594-amino-acid polypeptide reads, in one-letter code: DNA mismatch repair protein MutL (594 aa).

This sequence belongs to the DNA mismatch repair MutL/HexB family.

In terms of biological role, this protein is involved in the repair of mismatches in DNA. It is required for dam-dependent methyl-directed DNA mismatch repair. May act as a 'molecular matchmaker', a protein that promotes the formation of a stable complex between two or more DNA-binding proteins in an ATP-dependent manner without itself being part of a final effector complex. The polypeptide is DNA mismatch repair protein MutL (Tolumonas auensis (strain DSM 9187 / NBRC 110442 / TA 4)).